The following is a 58-amino-acid chain: Small ribosomal subunit protein bS21 (58 aa).

Residues 27–58 (GVLSEARKHEHYEKPSVKRKKKSEAARKRKFK) form a disordered region. The span at 31–42 (EARKHEHYEKPS) shows a compositional bias: basic and acidic residues. Residues 43–58 (VKRKKKSEAARKRKFK) show a composition bias toward basic residues.

Belongs to the bacterial ribosomal protein bS21 family.

This is Small ribosomal subunit protein bS21 from Desulfitobacterium hafniense (strain DSM 10664 / DCB-2).